Reading from the N-terminus, the 223-residue chain is Deoxyribose-phosphate aldolase (223 aa).

Residue D92 is the Proton donor/acceptor of the active site. K154 acts as the Schiff-base intermediate with acetaldehyde in catalysis. K182 (proton donor/acceptor) is an active-site residue.

The protein belongs to the DeoC/FbaB aldolase family. DeoC type 1 subfamily.

Its subcellular location is the cytoplasm. The enzyme catalyses 2-deoxy-D-ribose 5-phosphate = D-glyceraldehyde 3-phosphate + acetaldehyde. The protein operates within carbohydrate degradation; 2-deoxy-D-ribose 1-phosphate degradation; D-glyceraldehyde 3-phosphate and acetaldehyde from 2-deoxy-alpha-D-ribose 1-phosphate: step 2/2. In terms of biological role, catalyzes a reversible aldol reaction between acetaldehyde and D-glyceraldehyde 3-phosphate to generate 2-deoxy-D-ribose 5-phosphate. The polypeptide is Deoxyribose-phosphate aldolase (Haemophilus influenzae (strain PittEE)).